The primary structure comprises 39 residues: Alpha-conotoxin ArIA (39 aa).

Residues Ser-1 to Thr-17 constitute a propeptide that is removed on maturation. 2 cysteine pairs are disulfide-bonded: Cys-22–Cys-28 and Cys-23–Cys-36. Residues Ser-24–Pro-26 form a ser-Xaa-Pro motif, crucial for potent interaction with nAChR region. Pro-33 carries the 4-hydroxyproline; in ArIA modification.

Belongs to the conotoxin A superfamily. Expressed by the venom duct.

Its subcellular location is the secreted. In terms of biological role, alpha-conotoxins act on postsynaptic membranes, they bind to the nicotinic acetylcholine receptors (nAChR) and thus inhibit them. This toxin acts as a competitive inhibitor and is 3-fold more potent on alpha-7/CHRNA7 nAChRs (IC(50)=6 nM) than on alpha-3-beta-2/CHRNA3-CHRNB2 nAChR (IC(50)=18 nM). Its function is as follows. Acts as a competitive inhibitor and is 33-fold more potent on alpha-7/CHRNA7 nAChRs (IC(50)=1.8 nM) than on alpha-3-beta-2/CHRNA3-CHRNB2 nAChR (IC(50)=60.1 nM). This Conus arenatus (Sand-dusted cone) protein is Alpha-conotoxin ArIA.